A 500-amino-acid chain; its full sequence is Probable E3 ubiquitin-protein ligase ARI16 (500 aa).

The TRIAD supradomain stretch occupies residues 74 to 288 (NSNSSSADRE…QGNWNCSPVA (215 aa)). The segment at 78-130 (SSADRETGDGDYLVSTPFCSHKFSTTCWSEYLSDALKKNKEQRGLISCLSQDC) adopts an RING-type 1 zinc-finger fold. Zn(2+) is bound by residues Cys-96, His-98, Cys-125, Cys-130, Cys-169, Cys-174, Cys-194, Cys-196, Cys-201, Cys-204, His-209, Cys-214, Cys-241, Cys-244, Cys-261, Cys-263, Cys-268, Cys-271, His-278, and Cys-284. The IBR-type zinc finger occupies 148–214 (EMYENYILES…GLESHRPVSC (67 aa)). Residues 241–271 (CPKCKIPVQQNGDPNYRLINCICSNNFCWIC) form an RING-type 2; atypical zinc finger. Residues 453-483 (EPGSRWFCDRCTFENSWVDKQCKMCFFPLDY) form a RanBP2-type zinc finger.

It belongs to the RBR family. Ariadne subfamily. Requires Zn(2+) as cofactor. In terms of tissue distribution, preferentially expressed in green siliques.

It catalyses the reaction [E2 ubiquitin-conjugating enzyme]-S-ubiquitinyl-L-cysteine + [acceptor protein]-L-lysine = [E2 ubiquitin-conjugating enzyme]-L-cysteine + [acceptor protein]-N(6)-ubiquitinyl-L-lysine.. It participates in protein modification; protein ubiquitination. In terms of biological role, might act as an E3 ubiquitin-protein ligase, or as part of E3 complex, which accepts ubiquitin from specific E2 ubiquitin-conjugating enzymes and then transfers it to substrates. This is Probable E3 ubiquitin-protein ligase ARI16 (ARI16) from Arabidopsis thaliana (Mouse-ear cress).